Reading from the N-terminus, the 115-residue chain is uncharacterized protein (115 aa).

This is an uncharacterized protein from Caenorhabditis elegans.